A 204-amino-acid chain; its full sequence is Holliday junction branch migration complex subunit RuvA (204 aa).

Positions 1-64 (MIGKLKGTID…EDQLKLFGFM (64 aa)) are domain I. The domain II stretch occupies residues 65-143 (TALEREWFNL…AYAGEAINIA (79 aa)). The flexible linker stretch occupies residues 144-151 (LKRELGEG). The tract at residues 152 to 204 (VAAAPVADAVSALTNLGYSRDQAANAVAAAMKTAGEGADSAKLIRLGLKELAR) is domain III.

Belongs to the RuvA family. Homotetramer. Forms an RuvA(8)-RuvB(12)-Holliday junction (HJ) complex. HJ DNA is sandwiched between 2 RuvA tetramers; dsDNA enters through RuvA and exits via RuvB. An RuvB hexamer assembles on each DNA strand where it exits the tetramer. Each RuvB hexamer is contacted by two RuvA subunits (via domain III) on 2 adjacent RuvB subunits; this complex drives branch migration. In the full resolvosome a probable DNA-RuvA(4)-RuvB(12)-RuvC(2) complex forms which resolves the HJ.

It is found in the cytoplasm. Its function is as follows. The RuvA-RuvB-RuvC complex processes Holliday junction (HJ) DNA during genetic recombination and DNA repair, while the RuvA-RuvB complex plays an important role in the rescue of blocked DNA replication forks via replication fork reversal (RFR). RuvA specifically binds to HJ cruciform DNA, conferring on it an open structure. The RuvB hexamer acts as an ATP-dependent pump, pulling dsDNA into and through the RuvAB complex. HJ branch migration allows RuvC to scan DNA until it finds its consensus sequence, where it cleaves and resolves the cruciform DNA. The chain is Holliday junction branch migration complex subunit RuvA from Rhizobium etli (strain ATCC 51251 / DSM 11541 / JCM 21823 / NBRC 15573 / CFN 42).